We begin with the raw amino-acid sequence, 727 residues long: MLIGGAQNRLYQLRTSNILGLLRTRSALRVGSKVELRCPYNNWTNLGRSHFSSTSIPPTFKSKTFGREKGLLAHNINVKRLSSTVSKSKLPNEDTAHNASEKNSKKTDTKAVNISELKILKDLFKYIWPRGNTKVKVRVLLALALLIGAKVLNVQVPFFFKQIIDGMNVDWSDATVALPAALGLTIMCYGLARFGAVLFGELRNAIFARVAQNAIRNVSLQTFEHLMKLDLGWHLSRQTGGLTRAMDRGTKGISYVLSAMVFHIIPITFEISVVCGILTYQFGASFAGITFTTMLLYSIFTIRTTAWRTRFRKEANKADNKGASVALDSLINFEAVKYFNNESYLANKYHNSLIKYRDSQVKVAQSLAFLNSGQSLIFTTALTGMMYMGCTGVIGGDLTVGDLVLINQLVFQLSVPLNFLGSVYRELKQSLIDMESLFKLRKNQVKIQNCSQPKSISKSDGPFEIKFENVTFGYDGQRKILKNASFTIPAGMKTAIAGPSGSGKSTVLKLVFRFYDPEEGRVLVNGVDVREYDIDQLRKAIGVVPQDTPLFNDTIWENVKFGRIEASDEEITRVIDKAQLSDLIAKLPQGSSTIVGERGLMISGGEKQRLAIARVLLKDADIMFFDEATSALDTHTEQSLLRTIRRNFNSGEKTSVYIAHRLRTIADADKIIVLEEGTVREEGTHQELLARENSLYKELWRIQEDLDLLEDEINHEKETLEKLNKSI.

The transit peptide at 1–25 directs the protein to the mitochondrion; the sequence is MLIGGAQNRLYQLRTSNILGLLRTR. Over 26–138 the chain is Mitochondrial matrix; sequence SALRVGSKVE…PRGNTKVKVR (113 aa). A disordered region spans residues 87-107; the sequence is KSKLPNEDTAHNASEKNSKKT. Residues 90–107 show a composition bias toward basic and acidic residues; it reads LPNEDTAHNASEKNSKKT. The helical transmembrane segment at 139-160 threads the bilayer; it reads VLLALALLIGAKVLNVQVPFFF. The ABC transmembrane type-1 domain occupies 139–429; it reads VLLALALLIG…LGSVYRELKQ (291 aa). Topologically, residues 161–183 are mitochondrial intermembrane; that stretch reads KQIIDGMNVDWSDATVALPAALG. The helical transmembrane segment at 184-207 threads the bilayer; the sequence is LTIMCYGLARFGAVLFGELRNAIF. The Mitochondrial matrix segment spans residues 208–256; that stretch reads ARVAQNAIRNVSLQTFEHLMKLDLGWHLSRQTGGLTRAMDRGTKGISYV. The helical transmembrane segment at 257-280 threads the bilayer; that stretch reads LSAMVFHIIPITFEISVVCGILTY. Residue glutamine 281 is a topological domain, mitochondrial intermembrane. The helical transmembrane segment at 282 to 302 threads the bilayer; it reads FGASFAGITFTTMLLYSIFTI. The Mitochondrial matrix segment spans residues 303–368; it reads RTTAWRTRFR…SQVKVAQSLA (66 aa). Glutathione is bound by residues 308 to 312 and 371 to 374; these read RTRFR and NSGQ. A helical membrane pass occupies residues 369 to 387; sequence FLNSGQSLIFTTALTGMMY. Over 388 to 402 the chain is Mitochondrial intermembrane; sequence MGCTGVIGGDLTVGD. The helical transmembrane segment at 403–424 threads the bilayer; the sequence is LVLINQLVFQLSVPLNFLGSVY. Glycine 421 contributes to the glutathione binding site. The Mitochondrial matrix segment spans residues 425–727; it reads RELKQSLIDM…ETLEKLNKSI (303 aa). The ABC transporter domain maps to 465–701; it reads IKFENVTFGY…ENSLYKELWR (237 aa). Residues tyrosine 474 and 498–509 contribute to the ATP site; that span reads GPSGSGKSTVLK.

It belongs to the ABC transporter superfamily. ABCB family. Heavy Metal importer (TC 3.A.1.210) subfamily. Homodimer.

Its subcellular location is the mitochondrion inner membrane. In terms of biological role, performs an essential function in the generation of cytoplasmic iron-sulfur proteins by mediating the ATP-dependent export of Fe/S cluster precursors synthesized by NFS1 and other mitochondrial proteins. Hydrolyzes ATP. Binds glutathione and may function by transporting a glutathione-conjugated iron-sulfur compound. The chain is Iron-sulfur clusters transporter ATM1, mitochondrial from Candida glabrata (strain ATCC 2001 / BCRC 20586 / JCM 3761 / NBRC 0622 / NRRL Y-65 / CBS 138) (Yeast).